Consider the following 222-residue polypeptide: Translation initiation factor 6 (222 aa).

The protein belongs to the eIF-6 family.

In terms of biological role, binds to the 50S ribosomal subunit and prevents its association with the 30S ribosomal subunit to form the 70S initiation complex. The chain is Translation initiation factor 6 from Methanothermobacter thermautotrophicus (strain ATCC 29096 / DSM 1053 / JCM 10044 / NBRC 100330 / Delta H) (Methanobacterium thermoautotrophicum).